Consider the following 135-residue polypeptide: ATP synthase epsilon chain (135 aa).

This sequence belongs to the ATPase epsilon chain family. In terms of assembly, F-type ATPases have 2 components, CF(1) - the catalytic core - and CF(0) - the membrane proton channel. CF(1) has five subunits: alpha(3), beta(3), gamma(1), delta(1), epsilon(1). CF(0) has three main subunits: a, b and c.

The protein resides in the cell inner membrane. In terms of biological role, produces ATP from ADP in the presence of a proton gradient across the membrane. This chain is ATP synthase epsilon chain, found in Rhodopseudomonas palustris (strain ATCC BAA-98 / CGA009).